Consider the following 558-residue polypeptide: Potassium-transporting ATPase potassium-binding subunit (558 aa).

Transmembrane regions (helical) follow at residues 1–21, 59–79, 85–105, 130–150, 179–199, 245–265, 279–299, 374–394, 416–436, 484–504, and 527–547; these read MDTLAGILQVASVVLVLVLIH, PAYLRAVLAFSLVGVLVVYGL, FLPYALGLPAVPEGLSFNTAV, GLAVQNFVSAAVGIAVAIALV, LSLVTAVILIAGGVIQNFAGF, PTAWTSAFQVILMLAIPFSLP, TAIVAVMATIFVVSFTALTIF, GLYGMLILAVISVFVAGLLVG, ILVTPILVLVGTALSFAIPAV, ALGVAMLLGRFLPIVFVLALA, and FVGLLIGVTVIVTALTYFPVL.

It belongs to the KdpA family. As to quaternary structure, the system is composed of three essential subunits: KdpA, KdpB and KdpC.

The protein localises to the cell membrane. Part of the high-affinity ATP-driven potassium transport (or Kdp) system, which catalyzes the hydrolysis of ATP coupled with the electrogenic transport of potassium into the cytoplasm. This subunit binds the extracellular potassium ions and delivers the ions to the membrane domain of KdpB through an intramembrane tunnel. In Clavibacter michiganensis subsp. michiganensis (strain NCPPB 382), this protein is Potassium-transporting ATPase potassium-binding subunit.